The chain runs to 481 residues: MKANFGKKEGEYSRLVSKSSNKLLNSLWEKKQIPEEGWSEHTLDLFLSWLSSHDTNNRVDMIPVGAGEREGRVLTPLVQRLHSNLTHGIGRSGNLLEIQPKALGSSMLACLSNEFAKHALHLLGLHAVKSCIVVPLCTGMSLSLCMTSWRRRRPKAKYVVWLRIDQKSSLKSIYHAGFEPIIVEPIRDRDSLITDVETVNRIIEQRGEEILCVMTTTSCFAPRSPDNVEAISAICAAHDVPHLVNNAYGLQSEETIRKIAAAHECGRVDAVVQSLDKNFQVPVGGAVIAAFKQNHIQSIAQSYPGRASSVPSRDLVLTLLYQGQSAFLEPFGKQKQMFLKMRRKLISFAENIGECVYEVPENEISSAMTLSTIPPAKQTLFGSILFAKGITGARVVTSSQSKTTIEGCEFINFGSHTTEQHGGYLNIACSVGMTDHELEELFTRLTSSYAKFVRELAKEDERINSSGRRIPINESFDMEND.

A tetramerization region spans residues M1–E36. R69 provides a ligand contact to pyridoxal 5'-phosphate. The tract at residues G90–P100 is phosphate loop (P-loop). Substrate contacts are provided by R91, S92, and Q99. K277 carries the post-translational modification N6-(pyridoxal phosphate)lysine. Substrate is bound at residue R306.

The protein belongs to the SepSecS family. Homotetramer formed by a catalytic dimer and a non-catalytic dimer serving as a binding platform that orients tRNASec for catalysis. Each tetramer binds the CCA ends of two tRNAs which point to the active sites of the catalytic dimer. Pyridoxal 5'-phosphate is required as a cofactor.

The protein localises to the cytoplasm. The catalysed reaction is O-phospho-L-seryl-tRNA(Sec) + selenophosphate + H2O = L-selenocysteinyl-tRNA(Sec) + 2 phosphate. It participates in aminoacyl-tRNA biosynthesis; selenocysteinyl-tRNA(Sec) biosynthesis; selenocysteinyl-tRNA(Sec) from L-seryl-tRNA(Sec) (archaeal/eukaryal route): step 2/2. Converts O-phosphoseryl-tRNA(Sec) to selenocysteinyl-tRNA(Sec) required for selenoprotein biosynthesis. In Caenorhabditis elegans, this protein is O-phosphoseryl-tRNA(Sec) selenium transferase (secs-1).